A 64-amino-acid polypeptide reads, in one-letter code: Small ribosomal subunit protein bS21 (64 aa).

The protein belongs to the bacterial ribosomal protein bS21 family.

This chain is Small ribosomal subunit protein bS21, found in Anaeromyxobacter dehalogenans (strain 2CP-1 / ATCC BAA-258).